The following is a 712-amino-acid chain: Polyphosphate kinase (712 aa).

Position 49 (Asn49) interacts with ATP. Arg398 and Arg428 together coordinate Mg(2+). His458 acts as the Phosphohistidine intermediate in catalysis. Residues Tyr491, Arg587, and His615 each coordinate ATP.

Belongs to the polyphosphate kinase 1 (PPK1) family. Mg(2+) serves as cofactor. An intermediate of this reaction is the autophosphorylated ppk in which a phosphate is covalently linked to a histidine residue through a N-P bond.

It catalyses the reaction [phosphate](n) + ATP = [phosphate](n+1) + ADP. In terms of biological role, catalyzes the reversible transfer of the terminal phosphate of ATP to form a long-chain polyphosphate (polyP). The protein is Polyphosphate kinase of Parasynechococcus marenigrum (strain WH8102).